The chain runs to 102 residues: Alpha-hemoglobin-stabilizing protein (102 aa).

The protein belongs to the AHSP family. In terms of assembly, monomer. Forms a heterodimer with free alpha-hemoglobin. Does not bind beta-hemoglobin nor alpha(2)beta(2) hemoglobin A. In terms of tissue distribution, expressed in blood and bone marrow.

The protein localises to the cytoplasm. Its function is as follows. Acts as a chaperone to prevent the harmful aggregation of alpha-hemoglobin during normal erythroid cell development. Specifically protects free alpha-hemoglobin from precipitation. It is predicted to modulate pathological states of alpha-hemoglobin excess such as beta-thalassemia. This chain is Alpha-hemoglobin-stabilizing protein (AHSP), found in Homo sapiens (Human).